The sequence spans 2860 residues: MASSILAQSSTGATVDSSNLGATAAAATSVEATVSSLHNTHLNQLSSLSQHYTTPYHHPHSHSHPHHHYQQHYPQQQHLQQQQQQQHHAQQQHQQQQQQQQQQQQQHWDYYARQQQQHQQQQQQQQQPAAATGNTNGNSSNNGNNGNNGNNSNPDGSNTTVPAPLGSSNNSSSNHANAASGGNSGQRHGDANANAISAASAAVGNPGNQQPNNSAGNANSNSNSNSNSNGSYTRPWEMESKDNGPQPPQTQPHLQLKSGFEPFSKLPSFQSQFHGFNEQLLPDGTPMPVPIGAGVPPGSAAAVAAATGSIPPGSVGPNSVAGPVGPTAMSSLQTVAMSPASISVSSPGMMSVGSPLTQLSSLQTSITPPSAGSFPAPPPPNAFAHHHALNPHHHHRGASGYPTPYAELPLYPGFTPLSVKKEPISGGSDFEMLLKKEDFDLSNSGGAGLIHHPLQHGQPHPIPMGMHTPTSYDGNNSNNSYPQAAGGGSGSHTPHTTTTQPTPTTTTPVKVEKLLQSPIARLEARKKERRKQRPNSLESSAESEASGMDVDPSNPGQVDAVSSTANFKSPLSALGMGDSNDANASGCDKQSKKKRKRCGECVGCQRKDNCGECAPCRNDKSHQICKQRRCEKLTEKKIVFGADGQPVRPDSKRGRGKGKSSGSGNGTVNATGIAAGNGTPTTGQSRARKNSTKANKLNAAAASATSPRLSPVPAATLLPQQSPNTTSATGNLQQQQQQQQQQYQQHQQLLSQQQLLSQQQQQYQQPQQQQQHFQQQQQQHLQQQHAQQQHLPQQQHQITAQIQTMKDQPQQPMAPMAFYPTWQADPSQGWQNQFIQQIPQNTPAITSLNSLDFQTQSYAYPSNGYVQSGLGFDPNYGRSPYAAPVQRYDFQSQQLSTAPSAINQVGLQSVAGFAPSYAGQVSAAPVPPSQQQQQQQQQQQQQHLGADLNKTMSGNDTPGYPRVSSVPPRSLNCNGYSGDYSGSPATNSNSNNNSSSNTSNTNNSNASNNNATTVVSGGTTTPAPPPTVVAQPASSPMQPPNQAVPQSPTRSNMLQQQQQQHQSPTGNGLQPYVAPQQQQQQQQQQHLSSPPMQDWNWQQQQQQQQSLGGEGYAQGERLHLNTRIKSMIMRKSDPKDPPPDLQQQPQQVQQQQQTGHFLSYSHHLRPEAALSANGPSSATPTHPLPNLQQQQQQVQQVQQVQQQQQQQQAVGGQVAAEPIGGGGDHIWKPHHANSFKKPSVVSGYPASQDAQLQLQLQQHQPGQHTTINHSVDPPVVPPQQHPPVAAAQPKKSRSRSKASRAAAAAAAAAEAAAEIDRDRNSTDPGGGGLKPLSAHYPPHPHAAGGPPPGQDYHSQYIKTEPGLLGPPQPNKMEGYERNYQNFIQYADFCQNDGQGQPVQQHHGHGQQDYAGYHHNSAYYGAGASSFQQNFQQNFVPGYQHSTYGARGKPPANQPHQIHGHGQSLMELDRKPDTNSIIPLPTNYEKDIPAYPIPPHRYALGHGAPPHLSHHGMLEPKIEDMGMLGHGGGYAYLGSEGKPLNNGFSCCRQGGTRPPTAEHLKDGTCLGLGIQPKEELIDEDELIDTHGNGLKPIGGVGKAKGKQKPDEIPEIVVKHEKINPMFDTTDRLEKGNKTEIPECECFQSDKNPPEPGTYYTHLGTASSLMDLRREFEERCNLTGRQLRIEKIVYTGKEGKTSQGCPVAKWVIRRADLEEKILVVVKKRPGHRCIAAYIVVCMVAWDGMPRLEADNAYKNLIPKLNKYGLPTTRRCATNENRTCACQGLDPESSGASYSFGCSWSMYYNGCKYARSKTVRKFRLSVKSEEAAIEDHMNLIATLLAPVFKQVCPRSYDNQTKYEHEASDCRLGLEPGKPFSGVTACLDFCAHSHRDLHNMQDGCTVHVALLKPGNRDTRLPDDEQFHVLPLYTMDGTDEFESVEGQRDKHRTGAVQMLDKFPCEVRVRSTPLIPCRRHGKKRKDGDEAAPPDGDQDAVGDANSQSSSSNGAQSQTQANNQQSSPPALGTAHIKKENGNGVNANGASSKSKGKGKSNQSNNSSASTPGSAPPSTPSPRCQTPVTNNPSPAGSAFSTPPVHGSNANPQSNGGQGTGNQPGQLMSSNSSLMNMATMIDTFTDAQLQSNQISSTVLDSPYSYDYQTASYIDSRNYYGQWPTPHAPMGMQAQVGGLGGGGPGGTVAGVPPLTPSTPTAQPQLGVPPATSIAGGTTTGAPTGALPATAPPTATPTQLETSNGYGPGNYQTLVSNPASNLTNPGGVTTEVQQQHQQAQQQSALTGGVGPGGLPVVGGAPGDLKGRLVSEENPDSTTLVNHHHHHHNLTESKLTALTAMQPMTNLAPLTTSHHPQEGFVKPKPPPSDYTAQYTAQYPNNYQMYPPPPPPPHSAYSAYDAYQNMNYNYGYHQAYSPYGMYPQQTPPPTPPPPSPNWNMYGHHQTGSVNSGYGSANPAAGAGSLISSHGSVASAGVGLQKAMVPVPGPLHHQQQQVLQQQQQQQQQQQQQQQQQQQQQQQQVQQLQQEAPQTILPDLSNGQTNSDTVATPTPTGDSSSNDAGPGNPGAGNQAPASGAGAATTAPPIASPGSTNSTKIEPIGEVAEINENIEAFQDPQMGGVAIALNHGSVLIECAKHEMHATTAVRRPDRHHPTRMTLIFYQHRNLNRCRHGIDEWEEKMRVKKINTDLDNKAKEERERLIKKAAGEDMDELDEDALMQDEPVPIKKESSANGQQLKNGASGSKKKKSSDSKKSQANEQSKNEKVALHAPTLTTTSWTTLFPTHPCVVSGKYPEGNSSPTSSTNNAPNGGGCPAQQQQHLPPPPGSGLIHPPPGTPTGTAAPPPLPTPHQQLPQQQQT.

Disordered stretches follow at residues histidine 51–glutamine 255 and glycine 457–serine 562. Positions histidine 57–glutamine 70 are enriched in basic residues. 2 stretches are compositionally biased toward low complexity: residues glutamine 71–glycine 181 and alanine 191–serine 231. Polar residues predominate over residues threonine 468–proline 482. 2 stretches are compositionally biased toward low complexity: residues histidine 492–proline 508 and serine 536–serine 546. The CXXC-type zinc-finger motif lies at serine 591–glutamate 631. The Zn(2+) site is built by cysteine 598, cysteine 601, cysteine 604, cysteine 610, cysteine 613, cysteine 616, cysteine 625, and cysteine 630. 7 disordered regions span residues glycine 641–glutamine 734, glutamine 771–glutamine 810, glutamine 920–alanine 1113, arginine 1130–glycine 1155, leucine 1170–glutamine 1195, alanine 1209–tyrosine 1356, and glycine 1437–histidine 1460. Residues threonine 692–serine 706 are compositionally biased toward low complexity. Over residues leucine 718–leucine 732 the composition is skewed to polar residues. Low complexity-rich tracts occupy residues glutamine 771–threonine 804, glutamine 930–glutamine 942, and alanine 985–threonine 1021. Residues proline 1040–leucine 1054 show a composition bias toward polar residues. The segment covering glutamine 1076–glutamine 1085 has biased composition (low complexity). Over residues histidine 1086–tryptophan 1097 the composition is skewed to polar residues. Over residues leucine 1141–glutamine 1153 the composition is skewed to low complexity. 2 stretches are compositionally biased toward low complexity: residues glutamine 1248–glutamine 1263 and serine 1299–alanine 1312. The segment covering proline 1337–glycine 1349 has biased composition (pro residues). The Zn(2+) site is built by cysteine 1638, cysteine 1640, cysteine 1699, histidine 1725, and cysteine 1727. The interval leucine 1657–arginine 2666 is interaction with wds. Position 1767 (arginine 1767) interacts with 2-oxoglutarate. Positions 1777, 1779, 1795, 1804, and 1862 each coordinate Zn(2+). Cysteine 1878 provides a ligand contact to 2-oxoglutarate. A Zn(2+)-binding site is contributed by histidine 1884. Residues histidine 1886 and aspartate 1888 each coordinate Fe cation. Position 1891 (asparagine 1891) interacts with substrate. Residue histidine 1919 participates in 2-oxoglutarate binding. Disordered regions lie at residues proline 1966–serine 2115, leucine 2198–alanine 2229, serine 2263–glutamate 2334, alanine 2350–aspartate 2371, methionine 2422–histidine 2444, and leucine 2536–lysine 2598. Positions glutamate 1979–alanine 1989 are enriched in acidic residues. Composition is skewed to low complexity over residues alanine 1993–serine 2015 and glycine 2029–glycine 2059. Positions arginine 2069–serine 2086 are enriched in polar residues. The span at proline 2212–alanine 2229 shows a compositional bias: low complexity. Residues serine 2263 to valine 2275 show a composition bias toward polar residues. The span at glutamine 2276–glutamine 2285 shows a compositional bias: low complexity. Residues glycine 2290–proline 2304 show a composition bias toward gly residues. Positions glutamine 2426 to proline 2437 are enriched in pro residues. The span at serine 2540–aspartate 2562 shows a compositional bias: polar residues. Low complexity predominate over residues alanine 2570–threonine 2594. Fe cation is bound at residue histidine 2642. Arginine 2657–threonine 2659 provides a ligand contact to 2-oxoglutarate. A substrate-binding site is contributed by tyrosine 2663–histidine 2665. Histidine 2673 serves as a coordination point for Zn(2+). The segment at lysine 2729–threonine 2860 is disordered. The span at serine 2732 to alanine 2742 shows a compositional bias: polar residues. Over residues serine 2750–alanine 2768 the composition is skewed to basic and acidic residues. Low complexity-rich tracts occupy residues proline 2772–threonine 2785 and asparagine 2798–histidine 2821. Positions leucine 2822–threonine 2849 are enriched in pro residues. A compositionally biased stretch (low complexity) spans proline 2850 to threonine 2860.

Belongs to the TET family. As to quaternary structure, interacts (via C-terminus) with wds (via WD repeats). Requires Fe(2+) as cofactor. Zn(2+) serves as cofactor. As to expression, expressed in brain (at protein level).

The protein localises to the chromosome. The enzyme catalyses an N(6)-methyl-2'-deoxyadenosine in DNA + 2-oxoglutarate + O2 = a 2'-deoxyadenosine in DNA + formaldehyde + succinate + CO2. It carries out the reaction a 5-methyl-2'-deoxycytidine in DNA + 2-oxoglutarate + O2 = a 5-hydroxymethyl-2'-deoxycytidine in DNA + succinate + CO2. The catalysed reaction is a 5-hydroxymethyl-2'-deoxycytidine in DNA + 2-oxoglutarate + O2 = a 5-formyl-2'-deoxycytidine in DNA + succinate + CO2 + H2O. It catalyses the reaction a 5-formyl-2'-deoxycytidine in DNA + 2-oxoglutarate + O2 = a 5-carboxyl-2'-deoxycytidine in DNA + succinate + CO2 + H(+). Functionally, dioxygenase that specifically demethylates DNA methylated on the 6th position of adenine (N(6)-methyladenosine) DNA. N(6)-methyladenosine (m6A) DNA is present at a relatively high level at the very earliest embryonic stages but at low levels at the late embryonic stages and may act as a regulator of gene expression. Promotes differentiation of early germ cells in ovary. Contributes to neuronal morphology, development, and function in the brain. By interacting with histone modifier wds, binds to a specific set of genes, modulates intragenic (N(6)-methyladenosine) DNA levels and thereby maintains transcriptional activation. Also able to catalyze the conversion of the modified genomic base 5-methylcytosine (5mC) into 5-hydroxymethylcytosine (5hmC). This Drosophila melanogaster (Fruit fly) protein is Methylcytosine dioxygenase TET.